The following is a 521-amino-acid chain: Bifunctional purine biosynthesis protein PurH (521 aa).

The MGS-like domain maps to 1–147 (MAVIKRALIS…KNNRDVTVVV (147 aa)).

Belongs to the PurH family.

It carries out the reaction (6R)-10-formyltetrahydrofolate + 5-amino-1-(5-phospho-beta-D-ribosyl)imidazole-4-carboxamide = 5-formamido-1-(5-phospho-D-ribosyl)imidazole-4-carboxamide + (6S)-5,6,7,8-tetrahydrofolate. The catalysed reaction is IMP + H2O = 5-formamido-1-(5-phospho-D-ribosyl)imidazole-4-carboxamide. It functions in the pathway purine metabolism; IMP biosynthesis via de novo pathway; 5-formamido-1-(5-phospho-D-ribosyl)imidazole-4-carboxamide from 5-amino-1-(5-phospho-D-ribosyl)imidazole-4-carboxamide (10-formyl THF route): step 1/1. Its pathway is purine metabolism; IMP biosynthesis via de novo pathway; IMP from 5-formamido-1-(5-phospho-D-ribosyl)imidazole-4-carboxamide: step 1/1. The sequence is that of Bifunctional purine biosynthesis protein PurH from Syntrophotalea carbinolica (strain DSM 2380 / NBRC 103641 / GraBd1) (Pelobacter carbinolicus).